Here is a 161-residue protein sequence, read N- to C-terminus: Phosphopantetheine adenylyltransferase (161 aa).

Substrate is bound at residue Ser9. Residues 9–10 (SF) and His17 each bind ATP. Substrate contacts are provided by Lys41, Leu73, and Arg87. ATP-binding positions include 88–90 (GIR), Glu98, and 123–129 (TGFISST).

Belongs to the bacterial CoaD family. Homohexamer. It depends on Mg(2+) as a cofactor.

It localises to the cytoplasm. It carries out the reaction (R)-4'-phosphopantetheine + ATP + H(+) = 3'-dephospho-CoA + diphosphate. It functions in the pathway cofactor biosynthesis; coenzyme A biosynthesis; CoA from (R)-pantothenate: step 4/5. In terms of biological role, reversibly transfers an adenylyl group from ATP to 4'-phosphopantetheine, yielding dephospho-CoA (dPCoA) and pyrophosphate. This chain is Phosphopantetheine adenylyltransferase, found in Psychromonas ingrahamii (strain DSM 17664 / CCUG 51855 / 37).